Consider the following 53-residue polypeptide: ATP synthase protein 8 (53 aa).

A helical membrane pass occupies residues 4–24; the sequence is MAPISWLLLFIIFSITFILFC.

This sequence belongs to the ATPase protein 8 family. As to quaternary structure, F-type ATPases have 2 components, CF(1) - the catalytic core - and CF(0) - the membrane proton channel.

The protein localises to the mitochondrion membrane. Functionally, mitochondrial membrane ATP synthase (F(1)F(0) ATP synthase or Complex V) produces ATP from ADP in the presence of a proton gradient across the membrane which is generated by electron transport complexes of the respiratory chain. F-type ATPases consist of two structural domains, F(1) - containing the extramembraneous catalytic core and F(0) - containing the membrane proton channel, linked together by a central stalk and a peripheral stalk. During catalysis, ATP synthesis in the catalytic domain of F(1) is coupled via a rotary mechanism of the central stalk subunits to proton translocation. Part of the complex F(0) domain. Minor subunit located with subunit a in the membrane. In Drosophila mauritiana (Fruit fly), this protein is ATP synthase protein 8 (mt:ATPase8).